The chain runs to 69 residues: Small ribosomal subunit protein uS14 (69 aa).

The Zn(2+) site is built by cysteine 33, cysteine 36, cysteine 51, and cysteine 54.

This sequence belongs to the universal ribosomal protein uS14 family. Zinc-binding uS14 subfamily. In terms of assembly, part of the 30S ribosomal subunit. Zn(2+) serves as cofactor.

Binds 16S rRNA, required for the assembly of 30S particles. This chain is Small ribosomal subunit protein uS14, found in Nanoarchaeum equitans (strain Kin4-M).